Here is a 103-residue protein sequence, read N- to C-terminus: uncharacterized protein (103 aa).

Over residues 38-51 (TTTTSSTTSASTTS) the composition is skewed to low complexity. The tract at residues 38–70 (TTTTSSTTSASTTSQPSFSLPTSCNSNSPQSNL) is disordered. The span at 52–70 (QPSFSLPTSCNSNSPQSNL) shows a compositional bias: polar residues.

This is an uncharacterized protein from Dictyostelium discoideum (Social amoeba).